The chain runs to 458 residues: PH domain-containing protein DDB_G0274775 (458 aa).

One can recognise a PH domain in the interval 15 to 112 (PSDREGWLTK…WMESIKRNLD (98 aa)). The tract at residues 111–154 (LDGEGGMKSGGNDIVSSPKINSEPTPKVNQNGSAPEKSSLSSPR) is disordered. Polar residues predominate over residues 124–142 (IVSSPKINSEPTPKVNQNG). The segment covering 143 to 154 (SAPEKSSLSSPR) has biased composition (low complexity).

In Dictyostelium discoideum (Social amoeba), this protein is PH domain-containing protein DDB_G0274775.